A 154-amino-acid chain; its full sequence is Large ribosomal subunit protein uL30 (154 aa).

Residues 114 to 146 (PTLRLHPPRGGHDGVKHPVKEGGQLGKHDTEGI) form a disordered region. The span at 123-144 (GGHDGVKHPVKEGGQLGKHDTE) shows a compositional bias: basic and acidic residues.

The protein belongs to the universal ribosomal protein uL30 family. In terms of assembly, part of the 50S ribosomal subunit. Binds 5S rRNA.

This is one of 5 proteins that mediate the attachment of the 5S rRNA onto the large ribosomal subunit, stabilizing the orientation of adjacent RNA domains. This is Large ribosomal subunit protein uL30 from Haloarcula marismortui (strain ATCC 43049 / DSM 3752 / JCM 8966 / VKM B-1809) (Halobacterium marismortui).